Reading from the N-terminus, the 211-residue chain is Uracil phosphoribosyltransferase (211 aa).

5-phospho-alpha-D-ribose 1-diphosphate contacts are provided by residues arginine 78, arginine 103, and 130–138 (DPMLATGGT). Uracil contacts are provided by residues isoleucine 196 and 201–203 (GDA). Aspartate 202 is a binding site for 5-phospho-alpha-D-ribose 1-diphosphate.

The protein belongs to the UPRTase family. Mg(2+) is required as a cofactor.

The catalysed reaction is UMP + diphosphate = 5-phospho-alpha-D-ribose 1-diphosphate + uracil. It participates in pyrimidine metabolism; UMP biosynthesis via salvage pathway; UMP from uracil: step 1/1. Its activity is regulated as follows. Allosterically activated by GTP. Its function is as follows. Catalyzes the conversion of uracil and 5-phospho-alpha-D-ribose 1-diphosphate (PRPP) to UMP and diphosphate. This is Uracil phosphoribosyltransferase from Kineococcus radiotolerans (strain ATCC BAA-149 / DSM 14245 / SRS30216).